The following is a 196-amino-acid chain: Glycerol-3-phosphate acyltransferase (196 aa).

A run of 5 helical transmembrane segments spans residues 1–21, 53–73, 76–96, 115–135, and 141–161; these read MGFI…SILF, KYGA…AILD, YIDP…IGHI, VVFG…AFVF, and VSLA…EGDF.

This sequence belongs to the PlsY family. Probably interacts with PlsX.

It is found in the cell inner membrane. It carries out the reaction an acyl phosphate + sn-glycerol 3-phosphate = a 1-acyl-sn-glycero-3-phosphate + phosphate. Its pathway is lipid metabolism; phospholipid metabolism. Functionally, catalyzes the transfer of an acyl group from acyl-phosphate (acyl-PO(4)) to glycerol-3-phosphate (G3P) to form lysophosphatidic acid (LPA). This enzyme utilizes acyl-phosphate as fatty acyl donor, but not acyl-CoA or acyl-ACP. The chain is Glycerol-3-phosphate acyltransferase from Hydrogenobaculum sp. (strain Y04AAS1).